The chain runs to 379 residues: 2-methylcitrate synthase (379 aa).

Histidine 187 is a substrate binding site. Histidine 222 is an active-site residue. Residue 264–268 (KVMGF) coordinates CoA. The active site involves histidine 270. Residue arginine 279 coordinates substrate. Residue aspartate 321 is part of the active site. Residues arginine 346 and arginine 365 each contribute to the substrate site.

It belongs to the citrate synthase family. In terms of assembly, homodimer.

It carries out the reaction propanoyl-CoA + oxaloacetate + H2O = (2S,3S)-2-methylcitrate + CoA + H(+). The catalysed reaction is oxaloacetate + acetyl-CoA + H2O = citrate + CoA + H(+). The protein operates within organic acid metabolism; propanoate degradation. It functions in the pathway carbohydrate metabolism; tricarboxylic acid cycle; isocitrate from oxaloacetate: step 1/2. Involved in the catabolism of short chain fatty acids (SCFA) via the tricarboxylic acid (TCA)(acetyl degradation route) and via the 2-methylcitrate cycle I (propionate degradation route). Catalyzes the Claisen condensation of propionyl-CoA and oxaloacetate (OAA) to yield 2-methylcitrate (2-MC) and CoA. Also catalyzes the condensation of oxaloacetate with acetyl-CoA but with a lower specificity. The chain is 2-methylcitrate synthase (gltA) from Antarctic bacterium DS2-3R.